We begin with the raw amino-acid sequence, 377 residues long: Sodium-dependent organic anion transporter (377 aa).

At 1-29 (MRANCSSGLACPANSSEEELPEGLKAFGN) the chain is on the extracellular side. Asn-4 carries N-linked (GlcNAc...) asparagine glycosylation. Residues 30–50 (LDLVFTVVSALMIGLLMFSLG) traverse the membrane as a helical segment. Residues 51-67 (CSVEVQKLWGHIRRPWG) lie on the Cytoplasmic side of the membrane. Residues 68 to 88 (IAVGMLCQFGLMPLIAYLLII) form a helical membrane-spanning segment. Topologically, residues 89–97 (SFSLKPLQA) are extracellular. A helical transmembrane segment spans residues 98-118 (IAVLIMGCCPGGTVSNIFTFW). Residues 119-133 (VDGDMDLSISMTTCS) lie on the Cytoplasmic side of the membrane. The chain crosses the membrane as a helical span at residues 134 to 154 (TMAALGMMPLCLYLYTLSWNL). Topologically, residues 155–159 (EQNLT) are extracellular. A glycan (N-linked (GlcNAc...) asparagine) is linked at Asn-157. The chain crosses the membrane as a helical span at residues 160 to 180 (IPYQNIGITLVCLIIPVAFGI). At 181 to 195 (YVNYRWPKQSKIILK) the chain is on the cytoplasmic side. Residues 196-216 (IGAIAGGLLFLVVTGAGMVLM) traverse the membrane as a helical segment. Residues 217–223 (KEFWSSD) are Extracellular-facing. The chain crosses the membrane as a helical span at residues 224–244 (IILLMISFIFPLIGHATGFLL). Residues 245 to 257 (ALLTHQSWQRCRT) lie on the Cytoplasmic side of the membrane. Residues 258–278 (ISLETGTQNVQMCFTMLQLSF) form a helical membrane-spanning segment. The Extracellular segment spans residues 279–285 (TAEQLVQ). The helical transmembrane segment at 286–306 (IFGFVLAYGLFQMLNGFFMVA) threads the bilayer. Residues 307–377 (AYKMYKRRLK…TPTGDIARAK (71 aa)) are Cytoplasmic-facing. The interval 319-377 (HGNEKPSCQEARHRKKSTSPKETTAFLEVNEEATLSPGPSGPVDPHGAPTPTGDIARAK) is disordered.

The protein belongs to the bile acid:sodium symporter (BASS) (TC 2.A.28) family. Glycosylated.

Its subcellular location is the membrane. The enzyme catalyses estrone 3-sulfate(out) + 2 Na(+)(out) = estrone 3-sulfate(in) + 2 Na(+)(in). It carries out the reaction 17beta-estradiol 3-sulfate(out) + 2 Na(+)(out) = 17beta-estradiol 3-sulfate(in) + 2 Na(+)(in). It catalyses the reaction dehydroepiandrosterone 3-sulfate(out) + 2 Na(+)(out) = dehydroepiandrosterone 3-sulfate(in) + 2 Na(+)(in). The catalysed reaction is androst-5-ene-diol 3-sulfate(out) + 2 Na(+)(out) = androst-5-ene-diol 3-sulfate(in) + 2 Na(+)(in). The enzyme catalyses pregnenolone sulfate(out) + 2 Na(+)(out) = pregnenolone sulfate(in) + 2 Na(+)(in). It carries out the reaction taurolithocholate 3-sulfate(out) + 2 Na(+)(out) = taurolithocholate 3-sulfate(in) + 2 Na(+)(in). It catalyses the reaction androsterone 3alpha-sulfate(out) + 2 Na(+)(out) = androsterone 3alpha-sulfate(in) + 2 Na(+)(in). The catalysed reaction is 5alpha-dihydrotestosterone sulfate(out) + 2 Na(+)(out) = 5alpha-dihydrotestosterone sulfate(in) + 2 Na(+)(in). The enzyme catalyses 17beta-estradiol 17-sulfate(out) + 2 Na(+)(out) = 17beta-estradiol 17-sulfate(in) + 2 Na(+)(in). It carries out the reaction 17alpha-hydroxypregnenolone 3-sulfate(out) + 2 Na(+)(out) = 17alpha-hydroxypregnenolone 3-sulfate(in) + 2 Na(+)(in). It catalyses the reaction epiandrosterone 3-sulfate(out) + 2 Na(+)(out) = epiandrosterone 3-sulfate(in) + 2 Na(+)(in). The catalysed reaction is epitestosterone 17-sulfate(out) + 2 Na(+)(out) = epitestosterone 17-sulfate(in) + 2 Na(+)(in). The enzyme catalyses testosterone 17-sulfate(out) + 2 Na(+)(out) = testosterone 17-sulfate(in) + 2 Na(+)(in). It carries out the reaction 16alpha-hydroxydehydroepiandrosterone 3-sulfate(out) + 2 Na(+)(out) = 16alpha-hydroxydehydroepiandrosterone 3-sulfate(in) + 2 Na(+)(in). Transports sulfoconjugated steroid hormones from the extracellular compartment into the cytosol in a sodium-dependent manner without hydrolysis. Steroid sulfate hormones are commonly considered to be biologically inactive metabolites, that may be activated by steroid sulfatases into free steroids. May play an important role by delivering sulfoconjugated steroids to specific target cells in reproductive organs. May play a role transporting the estriol precursor 16alpha-hydroxydehydroepiandrosterone 3-sulfate (16a-OH-DHEAS) at the fetal blood vessel endothelium. Can also transport other sulfoconjugated molecules such as taurolithocholic acid-3-sulfate and sulfoconjugated pyrenes. In Bos taurus (Bovine), this protein is Sodium-dependent organic anion transporter (SLC10A6).